We begin with the raw amino-acid sequence, 331 residues long: Major outer membrane protein P.IB (331 aa).

The first 19 residues, 1–19, serve as a signal peptide directing secretion; sequence MKKSLIALTLAALPVAAMA.

The protein belongs to the Gram-negative porin family. Homotrimer.

It localises to the cell outer membrane. Functionally, serves as a slightly cation selective porin. The protein is Major outer membrane protein P.IB (porB) of Neisseria meningitidis serogroup B (strain ATCC BAA-335 / MC58).